A 552-amino-acid chain; its full sequence is Esterase E4 (552 aa).

Residues 1 to 23 (MKNTCGILLNLFLFIGCFLTCSA) form the signal peptide. N-linked (GlcNAc...) asparagine glycosylation is present at Asn81. A disulfide bridge links Cys89 with Cys106. The active-site Acyl-ester intermediate is the Ser214. Cys266 and Cys277 are oxidised to a cystine. The N-linked (GlcNAc...) asparagine glycan is linked to Asn269. Glu339 functions as the Charge relay system in the catalytic mechanism. N-linked (GlcNAc...) asparagine glycans are attached at residues Asn371, Asn404, and Asn443. His463 serves as the catalytic Charge relay system.

It belongs to the type-B carboxylesterase/lipase family.

The catalysed reaction is a carboxylic ester + H2O = an alcohol + a carboxylate + H(+). Overproduction of nonspecific esterases is a common mechanism of resistance to organophosphate insecticides. In Myzus persicae (Green peach aphid), this protein is Esterase E4.